Reading from the N-terminus, the 363-residue chain is Peptide chain release factor 2 (363 aa).

N5-methylglutamine is present on glutamine 251.

It belongs to the prokaryotic/mitochondrial release factor family. In terms of processing, methylated by PrmC. Methylation increases the termination efficiency of RF2.

The protein localises to the cytoplasm. Peptide chain release factor 2 directs the termination of translation in response to the peptide chain termination codons UGA and UAA. The sequence is that of Peptide chain release factor 2 from Helicobacter pylori (strain Shi470).